A 190-amino-acid chain; its full sequence is Glutathione peroxidase 2 (190 aa).

U40 is an active-site residue. Residue U40 is a non-standard amino acid, selenocysteine.

This sequence belongs to the glutathione peroxidase family. Homotetramer.

It localises to the cytoplasm. The protein localises to the cytosol. It carries out the reaction 2 glutathione + H2O2 = glutathione disulfide + 2 H2O. The enzyme catalyses a hydroperoxy polyunsaturated fatty acid + 2 glutathione = a hydroxy polyunsaturated fatty acid + glutathione disulfide + H2O. It catalyses the reaction tert-butyl hydroperoxide + 2 glutathione = tert-butanol + glutathione disulfide + H2O. The catalysed reaction is cumene hydroperoxide + 2 glutathione = 2-phenylpropan-2-ol + glutathione disulfide + H2O. It carries out the reaction (13S)-hydroperoxy-(9Z,11E)-octadecadienoate + 2 glutathione = (13S)-hydroxy-(9Z,11E)-octadecadienoate + glutathione disulfide + H2O. The enzyme catalyses (5S)-hydroperoxy-(6E,8Z,11Z,14Z)-eicosatetraenoate + 2 glutathione = (5S)-hydroxy-(6E,8Z,11Z,14Z)-eicosatetraenoate + glutathione disulfide + H2O. It catalyses the reaction (12R)-hydroperoxy-(5Z,8Z,10E,14Z)-eicosatetraenoate + 2 glutathione = (12R)-hydroxy-(5Z,8Z,10E,14Z)-eicosatetraenoate + glutathione disulfide + H2O. The catalysed reaction is (15S)-hydroperoxy-(5Z,8Z,11Z,13E)-eicosatetraenoate + 2 glutathione = (15S)-hydroxy-(5Z,8Z,11Z,13E)-eicosatetraenoate + glutathione disulfide + H2O. Functionally, catalyzes the reduction of hydroperoxides in a glutathione-dependent manner thus regulating cellular redox homeostasis. Can reduce small soluble hydroperoxides such as H2O2, cumene hydroperoxide and tert-butyl hydroperoxide, as well as several fatty acid-derived hydroperoxides. Cannot reduce phosphatidycholine hydroperoxide. This Sapajus apella (Brown-capped capuchin) protein is Glutathione peroxidase 2 (GPX2).